A 217-amino-acid polypeptide reads, in one-letter code: CLA biosynthesis enone reductase (217 aa).

3 residues coordinate FMN: arginine 20, serine 22, and arginine 24. Residue cysteine 51 participates in 10-oxooctadecanoate binding. 2 residues coordinate FMN: asparagine 78 and glutamine 81. Arginine 118 lines the 10-oxooctadecanoate pocket. Asparagine 165, serine 168, glycine 169, and arginine 206 together coordinate FMN.

Belongs to the nitroreductase family. In terms of assembly, homodimer. Requires FMN as cofactor.

It catalyses the reaction 10-oxo-(11E)-octadecenoate + NADH + H(+) = 10-oxooctadecanoate + NAD(+). The protein operates within lipid metabolism; fatty acid metabolism. Its function is as follows. Is involved in a saturation metabolic pathway of polyunsaturated fatty acids, that detoxifies unsaturated fatty acids and generates hydroxy fatty acids, oxo fatty acids, conjugated fatty acids such as conjugated linoleic acids (CLAs), and partially saturated trans-fatty acids as intermediates. CLA-ER catalyzes the saturation of the carbon-carbon double bond in 10-oxo-(11E)-octadecenoate to produce 10-oxooctadecanoate, during linoleate metabolism. As part of the gut microbiome, this enzyme modifies host fatty acid composition and is expected to improve human health by altering lipid metabolism related to the onset of metabolic syndrome. The chain is CLA biosynthesis enone reductase from Lactiplantibacillus plantarum (Lactobacillus plantarum).